The sequence spans 851 residues: DNA mismatch repair protein MutS (851 aa).

614–621 is a binding site for ATP; it reads GPNMGGKS.

The protein belongs to the DNA mismatch repair MutS family.

Its function is as follows. This protein is involved in the repair of mismatches in DNA. It is possible that it carries out the mismatch recognition step. This protein has a weak ATPase activity. The sequence is that of DNA mismatch repair protein MutS from Yersinia pseudotuberculosis serotype O:1b (strain IP 31758).